The sequence spans 364 residues: Protein Bop (364 aa).

Residues 66–88 (STASGTCGGKPAERGPLAGHMPS) form a disordered region. A BH3 motif is present at residues 114 to 128 (LDRFLAQLGDYMSFH). A disordered region spans residues 258 to 364 (QLTKESTPGP…PGEPPLSPGF (107 aa)). Pro residues-rich tracts occupy residues 311 to 322 (AQRPDPAHPGGP) and 355 to 364 (PGEPPLSPGF).

In terms of assembly, interacts (via BH3 domain) with VDAC1. Interacts with pro-survival Bcl-2 family members, BCL2, BCL2L1 isoform Bcl-X(L), MCL1, BCL2A1 and BCL2L2. Interacts with BAX and BAK1. In terms of tissue distribution, ubiquitously expressed.

It localises to the mitochondrion. In terms of biological role, could induce apoptosis in a BH3 domain-dependent manner. The direct interaction network of Bcl-2 family members may play a key role in modulation RTL10/BOP intrinsic apoptotic signaling activity. The sequence is that of Protein Bop from Homo sapiens (Human).